The sequence spans 321 residues: Protein APA1 (321 aa).

Residues 50–70 form a disordered region; the sequence is SLIEKPERGQTPEGEDPLGKP. Lys54 provides a ligand contact to substrate. The residue at position 60 (Thr60) is a Phosphothreonine. Residues 93 to 94, Asn145, and 151 to 154 each bind substrate; these read NK and GSSL. The active-site Nucleophile is His158. Substrate contacts are provided by residues Gln160, 273–275, Met280, and Lys284; that span reads NST.

It belongs to the ATP adenylyltransferase family. Monomer. It depends on a divalent metal cation as a cofactor. The N-terminus is blocked.

The protein resides in the cytoplasm. It localises to the nucleus. The enzyme catalyses ADP + ATP + H(+) = P(1),P(4)-bis(5'-adenosyl) tetraphosphate + phosphate. The catalysed reaction is sulfate + ADP + H(+) = adenosine 5'-phosphosulfate + phosphate. Its function is as follows. Ap4A phosphorylase catalyzes the phosphorolytic degradation of bis(5'-adenosyl) tetraphosphate (Ap4A) into ADP and ATP. Can also use other Np4N' nucleotides (where N and N' stand for A,C,G or U) as substrates with equal efficiency. Cannot catalyze the reverse reaction. Additionally, this enzyme can also catalyze the phosphorolytic degradation of adenosine 5'-phosphosulfate (AMPS) into ADP and sulfate, the reversible exchange reaction between inorganic phosphate and the beta-phosphate of a nucleoside diphosphate (NDP), and the synthesis of Ap4A from AMPS plus ATP. The polypeptide is Protein APA1 (Saccharomyces cerevisiae (strain ATCC 204508 / S288c) (Baker's yeast)).